The chain runs to 424 residues: Calreticulin (424 aa).

An N-terminal signal peptide occupies residues 1–29 (MAIRARSSSYAAAAVALALALASVAAVAG). The N-linked (GlcNAc...) asparagine glycan is linked to Asn61. Cys115 and Cys147 form a disulfide bridge. 4 residues coordinate an alpha-D-glucoside: Tyr119, Lys121, Tyr138, and Asp145. Repeat copies occupy residues 201 to 212 (KQSGSIYEHWDI), 220 to 231 (DPEAKKPEDWDD), 237 to 248 (DPEDKKPEGYDD), 255 to 266 (DPDAKKPEDWDD), 270 to 280 (GEWTAPTIPNP), 284 to 294 (GPWKQKKIKNP), and 298 to 308 (GKWKAPMIDNP). Positions 201-266 (KQSGSIYEHW…DAKKPEDWDD (66 aa)) are 4 X approximate repeats. Basic and acidic residues predominate over residues 217-262 (QIKDPEAKKPEDWDDKEYIPDPEDKKPEGYDDIPKEIPDPDAKKPE). A disordered region spans residues 217 to 289 (QIKDPEAKKP…PEYKGPWKQK (73 aa)). Positions 270–308 (GEWTAPTIPNPEYKGPWKQKKIKNPNYQGKWKAPMIDNP) are 3 X approximate repeats. Glu328 lines the an alpha-D-glucoside pocket. Basic and acidic residues predominate over residues 356-385 (ETWGKHKDAEKAAFDEAEKKKEEEEAAKAG). The tract at residues 356 to 424 (ETWGKHKDAE…DSDDEKHDEL (69 aa)) is disordered. Positions 386 to 401 (EDDDDLDDEDAEDEDK) are enriched in acidic residues. A compositionally biased stretch (basic and acidic residues) spans 402-424 (ADEKADSDAEDGKDSDDEKHDEL). The Prevents secretion from ER signature appears at 421–424 (HDEL).

This sequence belongs to the calreticulin family. Post-translationally, phosphorylated.

The protein resides in the endoplasmic reticulum lumen. Its function is as follows. Molecular calcium-binding chaperone promoting folding, oligomeric assembly and quality control in the ER via the calreticulin/calnexin cycle. This lectin may interact transiently with almost all of the monoglucosylated glycoproteins that are synthesized in the ER. This is Calreticulin from Oryza sativa subsp. japonica (Rice).